Reading from the N-terminus, the 308-residue chain is tRNA dimethylallyltransferase 1 (308 aa).

9 to 16 is an ATP binding site; sequence GPTGVGKT. 11-16 is a binding site for substrate; it reads TGVGKT. The interaction with substrate tRNA stretch occupies residues 34-37; the sequence is DSRQ.

Belongs to the IPP transferase family. In terms of assembly, monomer. Requires Mg(2+) as cofactor.

The catalysed reaction is adenosine(37) in tRNA + dimethylallyl diphosphate = N(6)-dimethylallyladenosine(37) in tRNA + diphosphate. In terms of biological role, catalyzes the transfer of a dimethylallyl group onto the adenine at position 37 in tRNAs that read codons beginning with uridine, leading to the formation of N6-(dimethylallyl)adenosine (i(6)A). This Bacteroides thetaiotaomicron (strain ATCC 29148 / DSM 2079 / JCM 5827 / CCUG 10774 / NCTC 10582 / VPI-5482 / E50) protein is tRNA dimethylallyltransferase 1.